Consider the following 359-residue polypeptide: Phosphoserine aminotransferase (359 aa).

An L-glutamate-binding site is contributed by arginine 42. Pyridoxal 5'-phosphate is bound by residues 76-77 (AS), tryptophan 102, threonine 152, aspartate 171, and glutamine 194. N6-(pyridoxal phosphate)lysine is present on lysine 195. 236-237 (NT) contacts pyridoxal 5'-phosphate.

The protein belongs to the class-V pyridoxal-phosphate-dependent aminotransferase family. SerC subfamily. As to quaternary structure, homodimer. Pyridoxal 5'-phosphate is required as a cofactor.

It is found in the cytoplasm. The enzyme catalyses O-phospho-L-serine + 2-oxoglutarate = 3-phosphooxypyruvate + L-glutamate. The catalysed reaction is 4-(phosphooxy)-L-threonine + 2-oxoglutarate = (R)-3-hydroxy-2-oxo-4-phosphooxybutanoate + L-glutamate. The protein operates within amino-acid biosynthesis; L-serine biosynthesis; L-serine from 3-phospho-D-glycerate: step 2/3. It functions in the pathway cofactor biosynthesis; pyridoxine 5'-phosphate biosynthesis; pyridoxine 5'-phosphate from D-erythrose 4-phosphate: step 3/5. In terms of biological role, catalyzes the reversible conversion of 3-phosphohydroxypyruvate to phosphoserine and of 3-hydroxy-2-oxo-4-phosphonooxybutanoate to phosphohydroxythreonine. This Ruthia magnifica subsp. Calyptogena magnifica protein is Phosphoserine aminotransferase.